A 215-amino-acid chain; its full sequence is Thiamine-phosphate synthase (215 aa).

4-amino-2-methyl-5-(diphosphooxymethyl)pyrimidine-binding positions include 37–41 and N69; that span reads QLRIK. 2 residues coordinate Mg(2+): D70 and D89. Residue S108 participates in 4-amino-2-methyl-5-(diphosphooxymethyl)pyrimidine binding. A 2-[(2R,5Z)-2-carboxy-4-methylthiazol-5(2H)-ylidene]ethyl phosphate-binding site is contributed by 134 to 136; that stretch reads TQT. K137 is a 4-amino-2-methyl-5-(diphosphooxymethyl)pyrimidine binding site. 2-[(2R,5Z)-2-carboxy-4-methylthiazol-5(2H)-ylidene]ethyl phosphate is bound by residues G166 and 186-187; that span reads VS.

The protein belongs to the thiamine-phosphate synthase family. Mg(2+) is required as a cofactor.

The enzyme catalyses 2-[(2R,5Z)-2-carboxy-4-methylthiazol-5(2H)-ylidene]ethyl phosphate + 4-amino-2-methyl-5-(diphosphooxymethyl)pyrimidine + 2 H(+) = thiamine phosphate + CO2 + diphosphate. It catalyses the reaction 2-(2-carboxy-4-methylthiazol-5-yl)ethyl phosphate + 4-amino-2-methyl-5-(diphosphooxymethyl)pyrimidine + 2 H(+) = thiamine phosphate + CO2 + diphosphate. The catalysed reaction is 4-methyl-5-(2-phosphooxyethyl)-thiazole + 4-amino-2-methyl-5-(diphosphooxymethyl)pyrimidine + H(+) = thiamine phosphate + diphosphate. It functions in the pathway cofactor biosynthesis; thiamine diphosphate biosynthesis; thiamine phosphate from 4-amino-2-methyl-5-diphosphomethylpyrimidine and 4-methyl-5-(2-phosphoethyl)-thiazole: step 1/1. In terms of biological role, condenses 4-methyl-5-(beta-hydroxyethyl)thiazole monophosphate (THZ-P) and 2-methyl-4-amino-5-hydroxymethyl pyrimidine pyrophosphate (HMP-PP) to form thiamine monophosphate (TMP). This chain is Thiamine-phosphate synthase, found in Yersinia pseudotuberculosis serotype I (strain IP32953).